A 574-amino-acid chain; its full sequence is Interleukin-1 receptor-like 2 (574 aa).

An N-terminal signal peptide occupies residues 1–21 (MGVTSLLFCGVFFLLLLFVAA). Topologically, residues 22 to 338 (DTCEDIFMHN…ILIYPVPDFR (317 aa)) are extracellular. 3 Ig-like C2-type domains span residues 25 to 113 (EDIF…VNLT), 132 to 215 (PDVY…IRNY), and 225 to 321 (YGRR…TCHA). N-linked (GlcNAc...) asparagine glycosylation is found at asparagine 43, asparagine 55, and asparagine 111. A disulfide bond links cysteine 44 and cysteine 97. A disulfide bridge connects residues cysteine 149 and cysteine 199. 6 N-linked (GlcNAc...) asparagine glycosylation sites follow: asparagine 231, asparagine 237, asparagine 253, asparagine 269, asparagine 290, and asparagine 302. An intrachain disulfide couples cysteine 252 to cysteine 319. The helical transmembrane segment at 339–359 (AYLLGGLMAFLLLVVSVLFIY) threads the bilayer. The Cytoplasmic segment spans residues 360-574 (NSFKIDIMLW…CNAATGLITP (215 aa)). The 156-residue stretch at 384–539 (KLYDAYVLYP…KFWKKVRYHM (156 aa)) folds into the TIR domain. Glutamate 470 is a catalytic residue.

Belongs to the interleukin-1 receptor family. In terms of assembly, interacts with IL1RAP; the association is enhanced by IL36B indicative for an functional signaling complex and inhibited by IL36RN. As to expression, expressed in bone marrow-derived dendritic cells, splenic CD4(+) T-cells, bone marrow-derived macrophages and bone marrow-derived neutrophils.

Its subcellular location is the membrane. The enzyme catalyses NAD(+) + H2O = ADP-D-ribose + nicotinamide + H(+). Functionally, receptor for interleukin-36 (IL36A, IL36B and IL36G). After binding to interleukin-36 associates with the coreceptor IL1RAP to form the interleukin-36 receptor complex which mediates interleukin-36-dependent activation of NF-kappa-B, MAPK and other pathways. The IL-36 signaling system is thought to be present in epithelial barriers and to take part in local inflammatory response; it is similar to the IL-1 system. Seems to be involved in skin inflammatory response by induction of the IL-23/IL-17/IL-22 pathway. This Mus musculus (Mouse) protein is Interleukin-1 receptor-like 2 (Il1rl2).